The primary structure comprises 323 residues: DNA-directed RNA polymerase subunit alpha (323 aa).

Residues 1-225 are alpha N-terminal domain (alpha-NTD); the sequence is MLDIAMPKIE…QYSQTIADFN (225 aa). An alpha C-terminal domain (alpha-CTD) region spans residues 243-323; that stretch reads PADIYDTPIE…TNSSPAGIES (81 aa).

Belongs to the RNA polymerase alpha chain family. Homodimer. The RNAP catalytic core consists of 2 alpha, 1 beta, 1 beta' and 1 omega subunit. When a sigma factor is associated with the core the holoenzyme is formed, which can initiate transcription.

It carries out the reaction RNA(n) + a ribonucleoside 5'-triphosphate = RNA(n+1) + diphosphate. In terms of biological role, DNA-dependent RNA polymerase catalyzes the transcription of DNA into RNA using the four ribonucleoside triphosphates as substrates. The chain is DNA-directed RNA polymerase subunit alpha from Roseiflexus castenholzii (strain DSM 13941 / HLO8).